Here is a 205-residue protein sequence, read N- to C-terminus: Small ribosomal subunit protein uS4 (205 aa).

The S4 RNA-binding domain occupies 94-157; sequence SRLDTVVYRM…KQIPLIQESV (64 aa).

The protein belongs to the universal ribosomal protein uS4 family. Part of the 30S ribosomal subunit. Contacts protein S5. The interaction surface between S4 and S5 is involved in control of translational fidelity.

One of the primary rRNA binding proteins, it binds directly to 16S rRNA where it nucleates assembly of the body of the 30S subunit. In terms of biological role, with S5 and S12 plays an important role in translational accuracy. The chain is Small ribosomal subunit protein uS4 from Rickettsia felis (strain ATCC VR-1525 / URRWXCal2) (Rickettsia azadi).